A 264-amino-acid polypeptide reads, in one-letter code: uncharacterized protein (264 aa).

The next 8 helical transmembrane spans lie at 19–39 (LFPAVIFASLAITQIIPLPFL), 42–62 (YDWLLIICVLMQLWMVRSGLE), 69–89 (VITLFHLIGLALELFKVHMGS), 100–120 (IFGVPLYSGFMYASVASYLCQ), 136–156 (FAVVPLAAAIYLNFFTHHFSI), 160–180 (WWLSGLVIIVFWQTWVTYEVN), 192–212 (FILIGFFIWIAENIATFFGAW), and 223–243 (LVHLGKVSSWLLLVIVSFLIV).

Its subcellular location is the cell membrane. This is an uncharacterized protein from Bacillus subtilis (strain 168).